Reading from the N-terminus, the 335-residue chain is Glyceraldehyde-3-phosphate dehydrogenase (335 aa).

NAD(+)-binding positions include 12–13, aspartate 34, and lysine 79; that span reads RI. D-glyceraldehyde 3-phosphate is bound by residues 150 to 152, threonine 181, 210 to 211, and arginine 233; these read SCT and TG. Cysteine 151 (nucleophile) is an active-site residue. Asparagine 315 is an NAD(+) binding site.

It belongs to the glyceraldehyde-3-phosphate dehydrogenase family. Homotetramer.

The protein localises to the cytoplasm. The enzyme catalyses D-glyceraldehyde 3-phosphate + phosphate + NAD(+) = (2R)-3-phospho-glyceroyl phosphate + NADH + H(+). Its pathway is carbohydrate degradation; glycolysis; pyruvate from D-glyceraldehyde 3-phosphate: step 1/5. The chain is Glyceraldehyde-3-phosphate dehydrogenase (GPD) from Debaryomyces hansenii (strain ATCC 36239 / CBS 767 / BCRC 21394 / JCM 1990 / NBRC 0083 / IGC 2968) (Yeast).